The following is a 603-amino-acid chain: Insulin-like growth factor-binding protein complex acid labile subunit (603 aa).

The signal sequence occupies residues 1–23 (MALRTGGPALVVLLAFWVALGPC). The 43-residue stretch at 32–74 (ASADAEGPQCPVACTCSHDDYTDELSVFCSSKNLTHLPDDIPV) folds into the LRRNT domain. Disulfide bonds link C41/C47 and C45/C60. N-linked (GlcNAc...) asparagine glycosylation is found at N64, N85, and N96. LRR repeat units follow at residues 75–96 (STRA…AFQN), 99–120 (SLDF…ALLG), 123–144 (NLYY…LFTH), 147–168 (SLAS…LFQG), 171–192 (HLWD…VFQG), 195–216 (NLHE…LFCG), 219–240 (ELRE…VFVH), 243–264 (RLQK…AFLG), 267–288 (ALRW…TFPG), 291–312 (GLHV…TFKD), 315–336 (FLEE…TFEG), 339–360 (QLEV…AFSG), 363–384 (NVAV…VFQG), 387–408 (KLHS…TFAG), 411–432 (GLRR…SLAG), 435–456 (ELLE…LFQG), 459–480 (HLEY…VLGP), 483–504 (RAFW…LFSS), and 507–528 (RVRY…PGLE). N-linked (GlcNAc...) asparagine glycosylation occurs at N368. Residue N515 is glycosylated (N-linked (GlcNAc...) asparagine). The LRRCT domain occupies 535 to 603 (NPWDCSCPLK…DVSETHFVHC (69 aa)). 3 disulfides stabilise this stretch: C539-C581, C541-C603, and C565-C570. N-linked (GlcNAc...) asparagine glycosylation is found at N578 and N586.

Forms a ternary complex with IGF1 and IGFBP3. Brain, kidney, lung, heart, spleen, muscle and liver.

The protein resides in the secreted. It is found in the extracellular space. May have an important role in regulating the access of circulating IGFs to the tissues. The chain is Insulin-like growth factor-binding protein complex acid labile subunit (Igfals) from Rattus norvegicus (Rat).